A 387-amino-acid polypeptide reads, in one-letter code: Chlorophyll synthase, chloroplastic (387 aa).

The N-terminal 57 residues, 1-57 (MTSILNTVSTIHSSRVTSVDRVGVLSLRNSDSVEFTRRRSGFSTLIYESPGRRFVVR), are a transit peptide targeting the chloroplast. The interval 62–81 (DTDKVKSQTPDKAPAGGSSI) is disordered. 7 consecutive transmembrane segments (helical) span residues 182-202 (VITQVWVLLLGGLGIAGILDV), 210-230 (TVFYLALGGSLLSYIYSAPPL), 241-261 (FALGASYISLPWWAGQALFGT), 266-286 (VVVLTLLYSIAGLGIAIVNDF), 311-331 (WICVGAIDITQLSVAGYLLAS), 336-356 (YALALVALIIPQIVFQFKYFL), and 364-384 (VKYQASAQPFLVLGIFVTALA).

It belongs to the UbiA prenyltransferase family. Chlorophyll synthase subfamily. In terms of tissue distribution, low level in flower buds, flowers, stems, leaves, greening cotyledons and immature siliques, but not in mature siliques or seeds.

The protein resides in the plastid. It localises to the chloroplast membrane. It catalyses the reaction phytyl diphosphate + chlorophyllide a + H(+) = chlorophyll a + diphosphate. Its pathway is porphyrin-containing compound metabolism; chlorophyll biosynthesis. Its function is as follows. Involved in one of the last steps of the biosynthesis of chlorophyll a. Catalyzes the esterification of chlorophillide a or b with a preference for geranylgeranyldiphosphate (GGPP) rather than for phytyldiphosphate (PhyPP). This is Chlorophyll synthase, chloroplastic (CHLG) from Arabidopsis thaliana (Mouse-ear cress).